The primary structure comprises 186 residues: Transposons Tn1721 resolvase (186 aa).

Residues 4 to 137 (HRIGYVRVSS…EGIALAKQRG (134 aa)) enclose the Resolvase/invertase-type recombinase catalytic domain. The active-site O-(5'-phospho-DNA)-serine intermediate is the Ser-12. Residues 164 to 183 (KAQLAREFNISRETLYQYLR) constitute a DNA-binding region (H-T-H motif).

This sequence belongs to the site-specific recombinase resolvase family.

Its function is as follows. Resolvase catalyzes the resolution (a site-specific recombination) of the cointegrated replicon to yield the final transposition products. The polypeptide is Transposons Tn1721 resolvase (tnpR) (Escherichia coli).